The primary structure comprises 451 residues: tRNA(Ile)-lysidine synthase (451 aa).

21–26 (SGGLDS) is a binding site for ATP.

This sequence belongs to the tRNA(Ile)-lysidine synthase family.

The protein resides in the cytoplasm. It catalyses the reaction cytidine(34) in tRNA(Ile2) + L-lysine + ATP = lysidine(34) in tRNA(Ile2) + AMP + diphosphate + H(+). In terms of biological role, ligates lysine onto the cytidine present at position 34 of the AUA codon-specific tRNA(Ile) that contains the anticodon CAU, in an ATP-dependent manner. Cytidine is converted to lysidine, thus changing the amino acid specificity of the tRNA from methionine to isoleucine. This chain is tRNA(Ile)-lysidine synthase, found in Yersinia pseudotuberculosis serotype O:1b (strain IP 31758).